The sequence spans 132 residues: uncharacterized protein (132 aa).

Helical transmembrane passes span 18 to 38, 50 to 70, and 71 to 91; these read MLFI…FIGI, IIYF…GVFI, and VVPL…LYLI.

Its subcellular location is the cell membrane. This is an uncharacterized protein from Bacillus subtilis (strain 168).